A 291-amino-acid chain; its full sequence is Early E4 34 kDa protein (291 aa).

This sequence belongs to the adenoviridae E4 30 to 34 kDa protein family. Interacts with E1B-55k.

It localises to the host nucleus. The protein localises to the host cytoplasm. Its function is as follows. Plays a major role to prevent cellular inhibition of viral genome replication by nuclear bodies. Assembles an SCF-like E3 ubiquitin ligase complex based on the cellular proteins ELOB, ELOC, CUL5 and RBX1, in cooperation with viral E1B-55K. This viral RING-type ligase ubiquitinates cellular substrates prior to proteasomal degradation: p53/TP53, LIG4, MRE11-RAD50-NBS1 (MRN) complex, ITGA3, DAXX and BLM. This Homo sapiens (Human) protein is Early E4 34 kDa protein.